A 115-amino-acid polypeptide reads, in one-letter code: Probable non-functional T cell receptor beta variable 7-3 (115 aa).

The first 21 residues, 1 to 21, serve as a signal peptide directing secretion; that stretch reads MGTRLLCWAALCLLGADHTGA. The region spanning 22–115 is the Ig-like domain; it reads GVSQTPSNKV…SAAYLRASSL (94 aa).

In terms of assembly, most probably, the alpha-beta TR is not assembled due to incorrect folding of the beta chain. Alpha-beta TR is a heterodimer composed of an alpha and beta chain; disulfide-linked. The alpha-beta TR is associated with the transmembrane signaling CD3 coreceptor proteins to form the TR-CD3 (TcR or TCR). The assembly of alpha-beta TR heterodimers with CD3 occurs in the endoplasmic reticulum where a single alpha-beta TR heterodimer associates with one CD3D-CD3E heterodimer, one CD3G-CD3E heterodimer and one CD247 homodimer forming a stable octameric structure. CD3D-CD3E and CD3G-CD3E heterodimers preferentially associate with TR alpha and TR beta chains, respectively. The association of the CD247 homodimer is the last step of TcR assembly in the endoplasmic reticulum and is required for transport to the cell surface.

It is found in the cell membrane. Its function is as follows. Probable non-functional open reading frame (ORF) of V region of the variable domain of T cell receptor (TR) beta chain. Non-functional ORF generally cannot participate in the synthesis of a productive T cell receptor (TR) chain due to altered V-(D)-J or switch recombination and/or splicing site (at mRNA level) and/or conserved amino acid change (protein level). Alpha-beta T cell receptors are antigen specific receptors which are essential to the immune response and are present on the cell surface of T lymphocytes. Recognize peptide-major histocompatibility (MH) (pMH) complexes that are displayed by antigen presenting cells (APC), a prerequisite for efficient T cell adaptive immunity against pathogens. Binding of alpha-beta TR to pMH complex initiates TR-CD3 clustering on the cell surface and intracellular activation of LCK that phosphorylates the ITAM motifs of CD3G, CD3D, CD3E and CD247 enabling the recruitment of ZAP70. In turn ZAP70 phosphorylates LAT, which recruits numerous signaling molecules to form the LAT signalosome. The LAT signalosome propagates signal branching to three major signaling pathways, the calcium, the mitogen-activated protein kinase (MAPK) kinase and the nuclear factor NF-kappa-B (NF-kB) pathways, leading to the mobilization of transcription factors that are critical for gene expression and essential for T cell growth and differentiation. The T cell repertoire is generated in the thymus, by V-(D)-J rearrangement. This repertoire is then shaped by intrathymic selection events to generate a peripheral T cell pool of self-MH restricted, non-autoaggressive T cells. Post-thymic interaction of alpha-beta TR with the pMH complexes shapes TR structural and functional avidity. The protein is Probable non-functional T cell receptor beta variable 7-3 of Homo sapiens (Human).